Consider the following 176-residue polypeptide: Putative Ras-related protein RABA4e (176 aa).

Belongs to the small GTPase superfamily. Rab family.

This Arabidopsis thaliana (Mouse-ear cress) protein is Putative Ras-related protein RABA4e (RABA4E).